Consider the following 251-residue polypeptide: Probable transcriptional regulatory protein BLA_1344 (251 aa).

Belongs to the TACO1 family.

The protein localises to the cytoplasm. This is Probable transcriptional regulatory protein BLA_1344 from Bifidobacterium animalis subsp. lactis (strain AD011).